The primary structure comprises 2726 residues: Filamin-C (2726 aa).

The interval 1–260 (MMNNSNYSDA…VMTYLSQFPK (260 aa)) is actin-binding. Serine 5 carries the post-translational modification Phosphoserine. Calponin-homology (CH) domains follow at residues 37 to 143 (KIQQ…LHYS) and 160 to 263 (QTPK…KAKL). Filamin repeat units lie at residues 271-369 (SKQL…EVNV), 371-469 (MALG…PVHV), 470-566 (AEAC…EVQV), 567-659 (SPEA…IAHI), 663-759 (PPDC…RVNV), 760-862 (GEGS…HIKV), 863-961 (DPSH…VVNV), 962-1057 (APPL…AVEG), 1058-1150 (VLPP…KATI), 1151-1245 (QPVF…RVHV), 1246-1345 (QPAV…RVGV), 1346-1438 (TEGC…RVPV), 1439-1534 (KDVV…KIKV), 1535-1631 (LPSH…RIHA), and 1636-1735 (DASK…HVLA). Position 1003 is an omega-N-methylarginine (arginine 1003). 2 positions are modified to phosphoserine: serine 1162 and serine 1339. The hinge 1 stretch occupies residues 1736 to 1759 (CDPLPHVEEPAEMLQMRQPYAPLR). 4 Filamin repeats span residues 1760-1855 (PGTC…QFYV), 1856-1947 (DAIN…TAKI), 1948-2034 (TGDD…KILV), and 2037-2129 (SEIG…TVKV). Residue serine 2043 is modified to Phosphoserine. Positions 2163–2244 (GNWFQMVSAQ…FGSITRQQEG (82 aa)) are intradomain insert; mediate targeting to Z lines. Positions 2193–2210 (EISKTRGGETKREVRVEE) are enriched in basic and acidic residues. The interval 2193-2214 (EISKTRGGETKREVRVEESTQV) is disordered. A Filamin 20; mediates interaction with XIRP1 repeat occupies 2212–2307 (TQVGGDPFPA…VPGSPFQFTV (96 aa)). Phosphoserine is present on residues serine 2234 and serine 2237. Threonine 2239 carries the phosphothreonine modification. Positions 2241 to 2260 (QQEGEASSQDMTAQVTSPSG) are enriched in polar residues. Residues 2241-2261 (QQEGEASSQDMTAQVTSPSGK) form a disordered region. Filamin repeat units follow at residues 2310-2402 (LGEG…VVPV), 2404-2497 (SLSD…KIRV), and 2501-2593 (SQAG…KAKV). Residues 2404-2725 (SLSDDARRLT…VPGSPFKVNV (322 aa)) are interaction with INPPL1. A phosphoserine mark is found at serine 2587, serine 2618, serine 2621, serine 2633, serine 2715, and serine 2719. The interval 2594 to 2630 (TGPRLSGGHSLHETSTVLVETVTKSSSSRGASYSSIP) is hinge 2. The segment at 2594–2726 (TGPRLSGGHS…PGSPFKVNVP (133 aa)) is self-association site, tail. One copy of the Filamin 24 repeat lies at 2631-2725 (KFSSDASKVV…VPGSPFKVNV (95 aa)).

This sequence belongs to the filamin family. Homodimer; the filamin repeat 24 and the second hinge domain are important for dimer formation. Interacts with FLNB, INPPL1, ITGB1A, KCND2, MYOT, MYOZ1 and MYOZ3. Interacts with sarcoglycans SGCD and SGCG. Interacts (via filament repeats 17-18, 20-21 and 24) with USP25 (isoform USP25m only). Interacts with FBLIM1. Interacts with XIRP1; this interaction is mediated by filamin 20 repeat. Interacts with KY. Interacts with IGFN1. Interacts with MICALL2. Interacts with ANK3. Interacts with MICALL2. Interacts with ANK3. Interacts with SYNPO2. In terms of processing, ubiquitinated by FBXL22, leading to proteasomal degradation.

It localises to the cytoplasm. The protein localises to the membrane. Its subcellular location is the cytoskeleton. It is found in the myofibril. The protein resides in the sarcomere. It localises to the z line. Functionally, muscle-specific filamin, which plays a central role in sarcomere assembly and organization. Critical for normal myogenesis, it probably functions as a large actin-cross-linking protein with structural functions at the Z lines in muscle cells. May be involved in reorganizing the actin cytoskeleton in response to signaling events. This chain is Filamin-C (Flnc), found in Mus musculus (Mouse).